The primary structure comprises 239 residues: Phosphoribosylaminoimidazole-succinocarboxamide synthase (239 aa).

This sequence belongs to the SAICAR synthetase family.

The enzyme catalyses 5-amino-1-(5-phospho-D-ribosyl)imidazole-4-carboxylate + L-aspartate + ATP = (2S)-2-[5-amino-1-(5-phospho-beta-D-ribosyl)imidazole-4-carboxamido]succinate + ADP + phosphate + 2 H(+). Its pathway is purine metabolism; IMP biosynthesis via de novo pathway; 5-amino-1-(5-phospho-D-ribosyl)imidazole-4-carboxamide from 5-amino-1-(5-phospho-D-ribosyl)imidazole-4-carboxylate: step 1/2. The protein is Phosphoribosylaminoimidazole-succinocarboxamide synthase of Acinetobacter baumannii (strain AB307-0294).